A 343-amino-acid chain; its full sequence is MRALVKTSPAPGLELTELPDPTPGANDIVVQVFRTGICGTDLHIDSWDEWAARTVPTPLVIGHEFAGEVVAVGSAVTQAQVGDFVSGEGHLVCGTCRNCRAGRRHLCANTRGLGVHHNGAFAEYAVLPEQNVWVHREHVDPDVAAIFDPFGNAVHTALTFPVVGEDVLITGAGPIGLMAACVARHAGARNVVITDVSEHRLELARRVGVDLAVNVAETGIADAQAKLGMSEGFDVAMEVSGQPSALRETIENMAHGGRIAMLGLPAERFQIDWSAVVLKMLTVKGIYGREMFETWYSMSVLLQSGLDLSPVITHRFPCTRHVEAFETARAGRCGKVILDWTVR.

C38 serves as a coordination point for Zn(2+). Residues T40 and H43 each act as charge relay system in the active site. Residues H63, E64, C93, C96, C99, and C107 each coordinate Zn(2+). NAD(+) contacts are provided by residues I175, D195, R200, 262–264 (LGL), and 286–287 (IY).

It belongs to the zinc-containing alcohol dehydrogenase family. In terms of assembly, homotetramer. Zn(2+) is required as a cofactor.

The protein localises to the cytoplasm. The enzyme catalyses L-threonine + NAD(+) = (2S)-2-amino-3-oxobutanoate + NADH + H(+). It participates in amino-acid degradation; L-threonine degradation via oxydo-reductase pathway; glycine from L-threonine: step 1/2. Its function is as follows. Catalyzes the NAD(+)-dependent oxidation of L-threonine to 2-amino-3-ketobutyrate. The protein is L-threonine 3-dehydrogenase of Saccharopolyspora erythraea (strain ATCC 11635 / DSM 40517 / JCM 4748 / NBRC 13426 / NCIMB 8594 / NRRL 2338).